The following is a 70-amino-acid chain: DNA-directed RNA polymerase subunit omega (70 aa).

Belongs to the RNA polymerase subunit omega family. As to quaternary structure, the RNAP catalytic core consists of 2 alpha, 1 beta, 1 beta' and 1 omega subunit. When a sigma factor is associated with the core the holoenzyme is formed, which can initiate transcription.

The enzyme catalyses RNA(n) + a ribonucleoside 5'-triphosphate = RNA(n+1) + diphosphate. Functionally, promotes RNA polymerase assembly. Latches the N- and C-terminal regions of the beta' subunit thereby facilitating its interaction with the beta and alpha subunits. This is DNA-directed RNA polymerase subunit omega from Methylobacillus flagellatus (strain ATCC 51484 / DSM 6875 / VKM B-1610 / KT).